Here is a 414-residue protein sequence, read N- to C-terminus: Putative competence-damage inducible protein (414 aa).

The protein belongs to the CinA family.

The polypeptide is Putative competence-damage inducible protein (Moorella thermoacetica (strain ATCC 39073 / JCM 9320)).